A 240-amino-acid chain; its full sequence is Uridylate kinase (240 aa).

ATP is bound at residue 13–16 (KLSG). Residues 21–26 (GDKGFG) form an involved in allosteric activation by GTP region. Residue G55 participates in UMP binding. ATP contacts are provided by G56 and R60. UMP-binding positions include D75 and 136 to 143 (IGNPYFST). ATP contacts are provided by N164, Y170, and D173.

This sequence belongs to the UMP kinase family. In terms of assembly, homohexamer.

The protein resides in the cytoplasm. It carries out the reaction UMP + ATP = UDP + ADP. It participates in pyrimidine metabolism; CTP biosynthesis via de novo pathway; UDP from UMP (UMPK route): step 1/1. Its activity is regulated as follows. Allosterically activated by GTP. Inhibited by UTP. Its function is as follows. Catalyzes the reversible phosphorylation of UMP to UDP. This is Uridylate kinase from Staphylococcus epidermidis (strain ATCC 35984 / DSM 28319 / BCRC 17069 / CCUG 31568 / BM 3577 / RP62A).